Consider the following 257-residue polypeptide: 5'-nucleotidase SurE (257 aa).

A divalent metal cation contacts are provided by aspartate 9, aspartate 10, serine 42, and asparagine 96.

Belongs to the SurE nucleotidase family. A divalent metal cation is required as a cofactor.

Its subcellular location is the cytoplasm. The catalysed reaction is a ribonucleoside 5'-phosphate + H2O = a ribonucleoside + phosphate. Functionally, nucleotidase that shows phosphatase activity on nucleoside 5'-monophosphates. This chain is 5'-nucleotidase SurE, found in Campylobacter lari (strain RM2100 / D67 / ATCC BAA-1060).